Consider the following 265-residue polypeptide: Hydroxyethylthiazole kinase (265 aa).

Residue M43 participates in substrate binding. ATP contacts are provided by R119 and S165. Residue A192 participates in substrate binding.

Belongs to the Thz kinase family. Requires Mg(2+) as cofactor.

The enzyme catalyses 5-(2-hydroxyethyl)-4-methylthiazole + ATP = 4-methyl-5-(2-phosphooxyethyl)-thiazole + ADP + H(+). It functions in the pathway cofactor biosynthesis; thiamine diphosphate biosynthesis; 4-methyl-5-(2-phosphoethyl)-thiazole from 5-(2-hydroxyethyl)-4-methylthiazole: step 1/1. Catalyzes the phosphorylation of the hydroxyl group of 4-methyl-5-beta-hydroxyethylthiazole (THZ). The protein is Hydroxyethylthiazole kinase of Haemophilus influenzae (strain ATCC 51907 / DSM 11121 / KW20 / Rd).